A 1242-amino-acid polypeptide reads, in one-letter code: DNA-directed RNA polymerase RPB2 homolog (1242 aa).

The segment at 1180–1201 (CRNCGEPAIYNASHPIYKCMNC) adopts a C4-type zinc-finger fold.

This sequence belongs to the RNA polymerase beta chain family. In terms of assembly, part of the viral DNA-directed RNA polymerase that consists of 8 polII-like subunits (RPB1, RPB2, RPB3, RPB5, RPB6, RPB7, RPB9, RPB10), a capping enzyme and a termination factor.

It is found in the host cytoplasm. It localises to the virion. The catalysed reaction is RNA(n) + a ribonucleoside 5'-triphosphate = RNA(n+1) + diphosphate. Its function is as follows. Catalytic component of the DNA-directed RNA polymerase (RNAP) that catalyzes the transcription in the cytoplasm of viral DNA into RNA using the four ribonucleoside triphosphates as substrates. Forms the polymerase active center together with RPB1. Part of the core element with the central large cleft, the clamp element that moves to open and close the cleft and the jaws that are thought to grab the incoming DNA template. The chain is DNA-directed RNA polymerase RPB2 homolog from African swine fever virus (isolate Pig/Kenya/KEN-50/1950) (ASFV).